The following is a 628-amino-acid chain: Glutamine--fructose-6-phosphate aminotransferase [isomerizing] (628 aa).

Catalysis depends on Cys-2, which acts as the Nucleophile; for GATase activity. The 228-residue stretch at 2–229 (CGIVGYVGHR…QDQAVVLTAD (228 aa)) folds into the Glutamine amidotransferase type-2 domain. Positions 61 to 94 (ETDSNDGDGLGGSTGLGHTRWATHGRPTDRNAHP) are disordered. SIS domains lie at 301–440 (SDQE…ARGT) and 473–618 (LAER…VDKP). Lys-623 acts as the For Fru-6P isomerization activity in catalysis.

Homodimer.

It localises to the cytoplasm. The catalysed reaction is D-fructose 6-phosphate + L-glutamine = D-glucosamine 6-phosphate + L-glutamate. In terms of biological role, catalyzes the first step in hexosamine metabolism, converting fructose-6P into glucosamine-6P using glutamine as a nitrogen source. This is Glutamine--fructose-6-phosphate aminotransferase [isomerizing] from Mycolicibacterium smegmatis (strain ATCC 700084 / mc(2)155) (Mycobacterium smegmatis).